The primary structure comprises 287 residues: Large ribosomal subunit protein uL2 (287 aa).

Positions 216 to 287 (RRPEVRGSVM…SKRGRGGRDA (72 aa)) are disordered. The segment covering 271–287 (QRRRRKSSKRGRGGRDA) has biased composition (basic residues).

This sequence belongs to the universal ribosomal protein uL2 family. Part of the 50S ribosomal subunit. Forms a bridge to the 30S subunit in the 70S ribosome.

In terms of biological role, one of the primary rRNA binding proteins. Required for association of the 30S and 50S subunits to form the 70S ribosome, for tRNA binding and peptide bond formation. It has been suggested to have peptidyltransferase activity; this is somewhat controversial. Makes several contacts with the 16S rRNA in the 70S ribosome. This is Large ribosomal subunit protein uL2 from Synechococcus sp. (strain ATCC 27144 / PCC 6301 / SAUG 1402/1) (Anacystis nidulans).